Reading from the N-terminus, the 84-residue chain is UPF0729 protein F18A11.3 (84 aa).

Residues 1–21 (MVCLPCIFLPIMMAIYMKFIM) form a helical membrane-spanning segment.

The protein belongs to the UPF0729 family.

Its subcellular location is the cell membrane. This Caenorhabditis elegans protein is UPF0729 protein F18A11.3.